Consider the following 231-residue polypeptide: Mediator of RNA polymerase II transcription subunit 18 (231 aa).

Residues 191–218 (HLTDIEALNKAVKELEKVKTELHGLMNL) are a coiled coil.

The protein belongs to the Mediator complex subunit 18 family. In terms of assembly, component of the Mediator complex.

The protein resides in the nucleus. In terms of biological role, component of the Mediator complex, a coactivator involved in the regulated transcription of nearly all RNA polymerase II-dependent genes. Mediator functions as a bridge to convey information from gene-specific regulatory proteins to the basal RNA polymerase II transcription machinery. Mediator is recruited to promoters by direct interactions with regulatory proteins and serves as a scaffold for the assembly of a functional preinitiation complex with RNA polymerase II and the general transcription factors. The chain is Mediator of RNA polymerase II transcription subunit 18 (SRB5) from Yarrowia lipolytica (strain CLIB 122 / E 150) (Yeast).